A 270-amino-acid polypeptide reads, in one-letter code: Aliphatic sulfonates import ATP-binding protein SsuB (270 aa).

The ABC transporter domain occupies 17–238 (LAANDLRRTF…VRGSHRLAAL (222 aa)). Position 49–56 (49–56 (GRSGCGKS)) interacts with ATP. Positions 250–270 (PGTPPEPEPVAPLPTHLRWAH) are disordered. Residues 251–261 (GTPPEPEPVAP) are compositionally biased toward pro residues.

It belongs to the ABC transporter superfamily. Aliphatic sulfonates importer (TC 3.A.1.17.2) family. The complex is composed of two ATP-binding proteins (SsuB), two transmembrane proteins (SsuC) and a solute-binding protein (SsuA).

Its subcellular location is the cell inner membrane. It carries out the reaction ATP + H2O + aliphatic sulfonate-[sulfonate-binding protein]Side 1 = ADP + phosphate + aliphatic sulfonateSide 2 + [sulfonate-binding protein]Side 1.. Functionally, part of the ABC transporter complex SsuABC involved in aliphatic sulfonates import. Responsible for energy coupling to the transport system. The sequence is that of Aliphatic sulfonates import ATP-binding protein SsuB from Pseudomonas entomophila (strain L48).